Reading from the N-terminus, the 645-residue chain is Protein disulfide-isomerase A4 (645 aa).

An N-terminal signal peptide occupies residues 1–20 (MRPRKAFLLLLLLGLVQLLA). Thioredoxin domains follow at residues 21–169 (VAGA…EVSQ) and 158–301 (EEIV…EFLK). A disordered region spans residues 24–58 (AEGPDEDSSNRENAIEDEEEEEEEDDDEEEDDLEV). A compositionally biased stretch (acidic residues) spans 38–58 (IEDEEEEEEEDDDEEEDDLEV). The CXXC signature appears at 91-94 (CGHC). Cystine bridges form between C91–C94 and C206–C209. N6-acetyllysine is present on K366. Positions 505 to 636 (FKKGKLKPVI…LSKFIEEHAT (132 aa)) constitute a Thioredoxin 3 domain. Positions 555–558 (CGHC) match the CXXC motif. Residues C555 and C558 are joined by a disulfide bond. The short motif at 642–645 (KEEL) is the Prevents secretion from ER element.

This sequence belongs to the protein disulfide isomerase family. In terms of assembly, part of a large chaperone multiprotein complex comprising DNAJB11, HSP90B1, HSPA5, HYOU, PDIA2, PDIA4, PDIA6, PPIB, SDF2L1, UGGT1 and very small amounts of ERP29, but not, or at very low levels, CALR nor CANX. Component of a complex containing at least CRELD2, MANF, MATN3 and PDIA4. As to quaternary structure, (Microbial infection) Interacts with Human astrovirus-1 and Human astrovirus-8 spike protein VP25; this interaction seems to facilitate the uncoating during virus entry into the cell. Does not interact with Human astrovirus-2 spike protein VP25.

The protein localises to the endoplasmic reticulum lumen. Its subcellular location is the melanosome. It carries out the reaction Catalyzes the rearrangement of -S-S- bonds in proteins.. This Homo sapiens (Human) protein is Protein disulfide-isomerase A4 (PDIA4).